Here is a 245-residue protein sequence, read N- to C-terminus: MREALRSLLVALQFLTRLPVRLSAMPTPEQFGRAVLCYPLVGVLIGVVLYAAARSLDGTPPLLQAALLLSLWVALSGALHLDGLADMADAWVGGLGDRERTLAIMKDPRSGPVAVVVLVLVLLLKFSALAALLGQGEAGLLPLAPWLARSSLPLLFLTTPYARPGGLGQAIAEHLPARSLPWVLGGSFGLALAFGLAGLLALLVTLMLFAWLRSRFLARLGGTTGDTAGALVELTECAVLVALAL.

5 consecutive transmembrane segments (helical) span residues 31 to 51 (FGRA…VLYA), 61 to 81 (PLLQ…ALHL), 113 to 133 (VAVV…AALL), 138 to 158 (AGLL…LFLT), and 192 to 212 (LAFG…FAWL).

It belongs to the CobS family. It depends on Mg(2+) as a cofactor.

The protein resides in the cell inner membrane. It catalyses the reaction alpha-ribazole + adenosylcob(III)inamide-GDP = adenosylcob(III)alamin + GMP + H(+). It carries out the reaction alpha-ribazole 5'-phosphate + adenosylcob(III)inamide-GDP = adenosylcob(III)alamin 5'-phosphate + GMP + H(+). Its pathway is cofactor biosynthesis; adenosylcobalamin biosynthesis; adenosylcobalamin from cob(II)yrinate a,c-diamide: step 7/7. Functionally, joins adenosylcobinamide-GDP and alpha-ribazole to generate adenosylcobalamin (Ado-cobalamin). Also synthesizes adenosylcobalamin 5'-phosphate from adenosylcobinamide-GDP and alpha-ribazole 5'-phosphate. The protein is Adenosylcobinamide-GDP ribazoletransferase of Pseudomonas aeruginosa (strain UCBPP-PA14).